The chain runs to 325 residues: Golgi to ER traffic protein 4 homolog A (325 aa).

Disordered regions lie at residues 1-22 and 306-325; these read MAAAMAEQEGSKGSARNRGGVQ and SGEDDDVEDGQEDSSPIELD. Residues 307 to 317 show a composition bias toward acidic residues; that stretch reads GEDDDVEDGQE.

It belongs to the GET4 family. In terms of assembly, component of the bag6/bat3 complex.

Its subcellular location is the cytoplasm. The protein resides in the cytosol. Functionally, as part of a cytosolic protein quality control complex, the bag6/bat3 complex, maintains misfolded and hydrophobic patches-containing proteins in a soluble state and participates in their proper delivery to the endoplasmic reticulum or alternatively can promote their sorting to the proteasome where they undergo degradation. The bag6/bat3 complex is involved in the post-translational delivery of tail-anchored/type II transmembrane proteins to the endoplasmic reticulum membrane. Similarly, the bag6/bat3 complex also functions as a sorting platform for proteins of the secretory pathway that are mislocalized to the cytosol either delivering them to the proteasome for degradation or to the endoplasmic reticulum. The bag6/bat3 complex also plays a role in the endoplasmic reticulum-associated degradation (ERAD), a quality control mechanism that eliminates unwanted proteins of the endoplasmic reticulum through their retrotranslocation to the cytosol and their targeting to the proteasome. It maintains these retrotranslocated proteins in an unfolded yet soluble state condition in the cytosol to ensure their proper delivery to the proteasome. The sequence is that of Golgi to ER traffic protein 4 homolog A (get4-a) from Xenopus laevis (African clawed frog).